Here is a 426-residue protein sequence, read N- to C-terminus: Histidine--tRNA ligase (426 aa).

It belongs to the class-II aminoacyl-tRNA synthetase family. As to quaternary structure, homodimer.

Its subcellular location is the cytoplasm. It catalyses the reaction tRNA(His) + L-histidine + ATP = L-histidyl-tRNA(His) + AMP + diphosphate + H(+). The polypeptide is Histidine--tRNA ligase (Streptococcus pyogenes serotype M6 (strain ATCC BAA-946 / MGAS10394)).